The chain runs to 79 residues: Cell division protein ZapB (79 aa).

Residues 4 to 78 are a coiled coil; the sequence is EVFEKLEAKV…LQALLGKMEE (75 aa).

This sequence belongs to the ZapB family. As to quaternary structure, homodimer. The ends of the coiled-coil dimer bind to each other, forming polymers. Interacts with FtsZ.

It is found in the cytoplasm. In terms of biological role, non-essential, abundant cell division factor that is required for proper Z-ring formation. It is recruited early to the divisome by direct interaction with FtsZ, stimulating Z-ring assembly and thereby promoting cell division earlier in the cell cycle. Its recruitment to the Z-ring requires functional FtsA or ZipA. The protein is Cell division protein ZapB of Cronobacter sakazakii (strain ATCC BAA-894) (Enterobacter sakazakii).